A 359-amino-acid polypeptide reads, in one-letter code: Type-1 angiotensin II receptor (359 aa).

At 1-25 (MVPNYSTEETVKRIHVDCPVSGRHS) the chain is on the extracellular side. Asn4 carries an N-linked (GlcNAc...) asparagine glycan. Residue Asp17 participates in angiotensin II binding. 2 cysteine pairs are disulfide-bonded: Cys18–Cys274 and Cys101–Cys180. A helical membrane pass occupies residues 26–55 (YIYIMVPTVYSIIFIIGIFGNSLVVIVIYC). The Cytoplasmic segment spans residues 56-61 (YMKLKT). The chain crosses the membrane as a helical span at residues 62–89 (VASIFLLNLALADLCFLITLPLWAAYTA). The Extracellular portion of the chain corresponds to 90–98 (MEYQWPFGN). Residues 99-125 (CLCKLASAGISFNLYASVFLLTCLSID) form a helical membrane-spanning segment. Topologically, residues 126 to 141 (RYLAIVHPVKSRIRRT) are cytoplasmic. The helical transmembrane segment at 142-165 (MFVARVTCIVIWLLAGVASLPVII) threads the bilayer. The Extracellular segment spans residues 166-190 (HRNIFFAENLNMTVCGFRYDNNNTT). Arg167 is an angiotensin II binding site. A glycan (N-linked (GlcNAc...) asparagine) is linked at Asn176. Residues Phe182 and Tyr184 each contribute to the angiotensin II site. N-linked (GlcNAc...) asparagine glycans are attached at residues Asn187 and Asn188. The chain crosses the membrane as a helical span at residues 191–216 (LRVGLGLSKNLLGFLIPFLIILTSYT). Lys199 is an angiotensin II binding site. Topologically, residues 217–239 (LIWKTLKKAYQIQRNKTRNDDIF) are cytoplasmic. Residues 240-268 (KMIVAIVFFFFFSWIPHQVFTFLDVLIQL) traverse the membrane as a helical segment. The Extracellular segment spans residues 269 to 278 (HVITDCKITD). A helical membrane pass occupies residues 279–304 (IVDTAMPFTICIAYFNNCLNPFFYVF). Residues 305–359 (FGKNFKKYFLQLIKYIPPNVSTHPSLTTKMSSLSYRPPENIRLPTKKTAGSFDAE) lie on the Cytoplasmic side of the membrane.

The protein belongs to the G-protein coupled receptor 1 family. In terms of processing, C-terminal Ser or Thr residues may be phosphorylated.

Its subcellular location is the cell membrane. In terms of biological role, receptor for angiotensin II, a vasoconstricting peptide, which acts as a key regulator of blood pressure and sodium retention by the kidney. The activated receptor in turn couples to G-alpha proteins G(q) (GNAQ, GNA11, GNA14 or GNA15) and thus activates phospholipase C and increases the cytosolic Ca(2+) concentrations, which in turn triggers cellular responses such as stimulation of protein kinase C. The protein is Type-1 angiotensin II receptor (AGTR1) of Gallus gallus (Chicken).